A 508-amino-acid polypeptide reads, in one-letter code: Matrix metalloproteinase-19 (508 aa).

Positions 1 to 18 (MNCQQLWLGFLLPMTVSG) are cleaved as a signal peptide. The propeptide occupies 19 to 97 (RVLGLAEVAP…EDPFNQKTLK (79 aa)). A Cysteine switch motif is present at residues 83–90 (PRCGLEDP). 2 residues coordinate Zn(2+): Cys-85 and His-212. The active site involves Glu-213. Zn(2+) contacts are provided by His-216 and His-222. A disordered region spans residues 262–288 (IRDEEEEETELPTVPPVPTEPSPMPDP). Residues 274-287 (TVPPVPTEPSPMPD) are compositionally biased toward pro residues. 4 Hemopexin repeats span residues 286–333 (PDPC…WEGL), 334–380 (PGNL…EPNL), 381–425 (DAAL…FTGV), and 426–472 (PNQP…WMHC). Cys-289 and Cys-472 form a disulfide bridge. Asn-464 is a glycosylation site (N-linked (GlcNAc...) asparagine).

This sequence belongs to the peptidase M10A family. Zn(2+) serves as cofactor. Requires Ca(2+) as cofactor. In terms of processing, activated by autolytic cleavage after Lys-97. Post-translationally, tyrosine phosphorylated by PKDCC/VLK. Expressed in mammary gland, placenta, lung, pancreas, ovary, small intestine, spleen, thymus, prostate, testis colon, heart and blood vessel walls. Not detected in brain and peripheral blood leukocytes. Also expressed in the synovial fluid of normal and rheumatoid patients.

It localises to the secreted. The protein resides in the extracellular space. It is found in the extracellular matrix. Strongly inhibited by TIMP-2, TIMP-3 and TIMP-4, while TIMP-1 is less efficient. Its function is as follows. Endopeptidase that degrades various components of the extracellular matrix, such as aggrecan and cartilage oligomeric matrix protein (comp), during development, haemostasis and pathological conditions (arthritic disease). May also play a role in neovascularization or angiogenesis. Hydrolyzes collagen type IV, laminin, nidogen, nascin-C isoform, fibronectin, and type I gelatin. This Homo sapiens (Human) protein is Matrix metalloproteinase-19 (MMP19).